We begin with the raw amino-acid sequence, 331 residues long: Centriolar satellite-associated tubulin polyglutamylase complex regulator 1 (331 aa).

A disordered region spans residues 283-331; that stretch reads PTSNNNSSSSALGQKEMSKKASPRKSLHQRKRIEMESDGSTEETDSSEN. Positions 303–313 are enriched in basic residues; sequence ASPRKSLHQRK. The span at 318–331 shows a compositional bias: acidic residues; it reads ESDGSTEETDSSEN.

The protein belongs to the CSTPP1 family. As to quaternary structure, interacts with PCM1. Interacts with the complex TPGC. Binds to alpha-tubulin. In terms of tissue distribution, expression in elevated in ciliated tissues/organs, including brain, spinal cord, kidney, eyes, ears and lateral line.

The protein resides in the cytoplasm. The protein localises to the cytoskeleton. Its subcellular location is the microtubule organizing center. It localises to the centrosome. It is found in the centriolar satellite. In terms of biological role, regulator of the tubulin polyglutamylase complex (TPGC) that controls cytoskeletal organization, nuclear shape, and cilium disassembly by balancing microtubule and actin assembly. Regulates the assembly and stability of the TPGC and thereby modulates polyglutamylation of the microtubule, which antagonizes MAP4 binding. The chain is Centriolar satellite-associated tubulin polyglutamylase complex regulator 1 (cstpp1) from Danio rerio (Zebrafish).